The sequence spans 153 residues: UPF0756 membrane protein lwe1581 (153 aa).

The next 4 helical transmembrane spans lie at 6–26 (MLFL…SLII), 54–74 (WGVT…QIGF), 80–100 (SFKS…SILA), and 117–137 (LVFG…GPVI).

This sequence belongs to the UPF0756 family.

Its subcellular location is the cell membrane. This chain is UPF0756 membrane protein lwe1581, found in Listeria welshimeri serovar 6b (strain ATCC 35897 / DSM 20650 / CCUG 15529 / CIP 8149 / NCTC 11857 / SLCC 5334 / V8).